Here is a 182-residue protein sequence, read N- to C-terminus: Ribosome-recycling factor (182 aa).

Positions 136-158 are disordered; the sequence is IKKQEKEGDLSEDQSRDEQDQVQ.

This sequence belongs to the RRF family.

The protein resides in the cytoplasm. Responsible for the release of ribosomes from messenger RNA at the termination of protein biosynthesis. May increase the efficiency of translation by recycling ribosomes from one round of translation to another. The sequence is that of Ribosome-recycling factor from Synechococcus sp. (strain CC9311).